The chain runs to 200 residues: Trem-like transcript 4 protein (200 aa).

The signal sequence occupies residues 1-25 (MAWGGVHTCCFHLCCCCSWPQGAVP). Positions 26 to 126 (EELHKHPGQT…NIITVLRNIS (101 aa)) constitute an Ig-like V-type domain. Cysteines 40 and 109 form a disulfide. N-linked (GlcNAc...) asparagine glycosylation occurs at Asn93.

The protein localises to the secreted. In terms of biological role, positively regulates Toll-like receptor TLR7 signaling in macrophages. In Homo sapiens (Human), this protein is Trem-like transcript 4 protein (TREML4).